We begin with the raw amino-acid sequence, 86 residues long: Acyl carrier protein (86 aa).

The Carrier domain occupies 2–82; the sequence is ATVFERVKKV…AVVDYLKSKG (81 aa). Ser-37 bears the O-(pantetheine 4'-phosphoryl)serine mark.

The protein belongs to the acyl carrier protein (ACP) family. 4'-phosphopantetheine is transferred from CoA to a specific serine of apo-ACP by AcpS. This modification is essential for activity because fatty acids are bound in thioester linkage to the sulfhydryl of the prosthetic group.

Its subcellular location is the cytoplasm. It functions in the pathway lipid metabolism; fatty acid biosynthesis. Its function is as follows. Carrier of the growing fatty acid chain in fatty acid biosynthesis. The protein is Acyl carrier protein of Dehalococcoides mccartyi (strain ATCC BAA-2266 / KCTC 15142 / 195) (Dehalococcoides ethenogenes (strain 195)).